A 221-amino-acid chain; its full sequence is LHFPL tetraspan subfamily member 5 protein (221 aa).

Over 1 to 24 (MPKLLPAQEAARIYHTNYVRNARA) the chain is Cytoplasmic. Residues 25–45 (MGVLWALFTLCFSILMVVTFI) traverse the membrane as a helical segment. Residues 46 to 98 (QPYWIGDSIDTPQAGYFGLFSYCIGNALTGELICKGSPLDFGTIPSSAFKTAM) lie on the Extracellular side of the membrane. The chain crosses the membrane as a helical span at residues 99 to 119 (FFVGISTFLIIGSILCFSLFF). At 120–128 (FCNAATVYK) the chain is on the cytoplasmic side. Residues 129–149 (VCAWMQLAAATGLMIGCLIYP) traverse the membrane as a helical segment. Residues 150 to 179 (DGWDSSEVKRMCGDKTDKYTLGACTVRWAY) are Extracellular-facing. Residues 180–200 (ILCIIGILDALILSFLAFVLG) traverse the membrane as a helical segment. Topologically, residues 201 to 221 (NRQDNLLPSDFKVESKEEGNE) are cytoplasmic.

Belongs to the LHFP family.

It is found in the cell membrane. In terms of biological role, probable component of the mechanotransducer (MET) non-specific cation channel complex. This Gallus gallus (Chicken) protein is LHFPL tetraspan subfamily member 5 protein.